The following is a 393-amino-acid chain: tRNA(Met) cytidine acetate ligase (393 aa).

ATP contacts are provided by Gly81, Asn142, and Arg167.

It belongs to the TmcAL family.

It is found in the cytoplasm. The enzyme catalyses cytidine(34) in elongator tRNA(Met) + acetate + ATP = N(4)-acetylcytidine(34) in elongator tRNA(Met) + AMP + diphosphate. Functionally, catalyzes the formation of N(4)-acetylcytidine (ac(4)C) at the wobble position of elongator tRNA(Met), using acetate and ATP as substrates. First activates an acetate ion to form acetyladenylate (Ac-AMP) and then transfers the acetyl group to tRNA to form ac(4)C34. This Bacillus cereus (strain 03BB102) protein is tRNA(Met) cytidine acetate ligase.